The sequence spans 101 residues: Small ribosomal subunit protein uS14 (101 aa).

Belongs to the universal ribosomal protein uS14 family. Part of the 30S ribosomal subunit. Contacts proteins S3 and S10.

Its function is as follows. Binds 16S rRNA, required for the assembly of 30S particles and may also be responsible for determining the conformation of the 16S rRNA at the A site. The chain is Small ribosomal subunit protein uS14 from Alteromonas mediterranea (strain DSM 17117 / CIP 110805 / LMG 28347 / Deep ecotype).